Here is a 499-residue protein sequence, read N- to C-terminus: Argininosuccinate lyase (499 aa).

Residues 1–22 form a disordered region; that stretch reads MSDGEDHETANADDRDETVVRR. The segment covering 7–22 has biased composition (basic and acidic residues); it reads HETANADDRDETVVRR.

Belongs to the lyase 1 family. Argininosuccinate lyase subfamily.

It localises to the cytoplasm. The catalysed reaction is 2-(N(omega)-L-arginino)succinate = fumarate + L-arginine. It participates in amino-acid biosynthesis; L-arginine biosynthesis; L-arginine from L-ornithine and carbamoyl phosphate: step 3/3. This is Argininosuccinate lyase from Haloarcula marismortui (strain ATCC 43049 / DSM 3752 / JCM 8966 / VKM B-1809) (Halobacterium marismortui).